The primary structure comprises 416 residues: MSLVAIGINHKTATVDLREKVAFAPDKIHEAMKSLASRTKTGEAVIVSTCNRTELYCNTGDEADVISWLESYHQLSHDDVLPCLYKYQGQQVVQHLMRVSSGLDSLILGEPQILGQVKQSFVKAKEAGTVAVTMDRLFQNTFSVAKKVRTETEIGAAAVSVAFAAVSMAKHIFSALSATKVLLIGAGETIELVARHLKDNGVDSMIVANRTISRAEAMCEEFGATAITLEQIPDFLPKADIVISSTASPLPILGKGMVEKALKQRRHQPMLLVDIAVPRDIEAEVADLDDAFLYTVDDLQSIIEQNMASRREAAEKAELIVEEESHHFMEWIRSLESVDSIREYRSQSMAIRDELVERAINKLAQGGDSEQLILELANKLTNKLIHAPTQALTQASRRGDLNSLGQLRAALGLDKD.

Substrate-binding positions include 49–52 (TCNR), serine 105, 110–112 (EPQ), and glutamine 116. Cysteine 50 (nucleophile) is an active-site residue. An NADP(+)-binding site is contributed by 185-190 (GAGETI).

Belongs to the glutamyl-tRNA reductase family. As to quaternary structure, homodimer.

The enzyme catalyses (S)-4-amino-5-oxopentanoate + tRNA(Glu) + NADP(+) = L-glutamyl-tRNA(Glu) + NADPH + H(+). It participates in porphyrin-containing compound metabolism; protoporphyrin-IX biosynthesis; 5-aminolevulinate from L-glutamyl-tRNA(Glu): step 1/2. Its function is as follows. Catalyzes the NADPH-dependent reduction of glutamyl-tRNA(Glu) to glutamate 1-semialdehyde (GSA). The polypeptide is Glutamyl-tRNA reductase (Shewanella loihica (strain ATCC BAA-1088 / PV-4)).